The primary structure comprises 95 residues: Aspartyl/glutamyl-tRNA(Asn/Gln) amidotransferase subunit C (95 aa).

Belongs to the GatC family. Heterotrimer of A, B and C subunits.

It catalyses the reaction L-glutamyl-tRNA(Gln) + L-glutamine + ATP + H2O = L-glutaminyl-tRNA(Gln) + L-glutamate + ADP + phosphate + H(+). It carries out the reaction L-aspartyl-tRNA(Asn) + L-glutamine + ATP + H2O = L-asparaginyl-tRNA(Asn) + L-glutamate + ADP + phosphate + 2 H(+). Allows the formation of correctly charged Asn-tRNA(Asn) or Gln-tRNA(Gln) through the transamidation of misacylated Asp-tRNA(Asn) or Glu-tRNA(Gln) in organisms which lack either or both of asparaginyl-tRNA or glutaminyl-tRNA synthetases. The reaction takes place in the presence of glutamine and ATP through an activated phospho-Asp-tRNA(Asn) or phospho-Glu-tRNA(Gln). The chain is Aspartyl/glutamyl-tRNA(Asn/Gln) amidotransferase subunit C from Methylocella silvestris (strain DSM 15510 / CIP 108128 / LMG 27833 / NCIMB 13906 / BL2).